The sequence spans 185 residues: Ribosome-recycling factor (185 aa).

Belongs to the RRF family.

It is found in the cytoplasm. Responsible for the release of ribosomes from messenger RNA at the termination of protein biosynthesis. May increase the efficiency of translation by recycling ribosomes from one round of translation to another. This Erwinia tasmaniensis (strain DSM 17950 / CFBP 7177 / CIP 109463 / NCPPB 4357 / Et1/99) protein is Ribosome-recycling factor.